The sequence spans 105 residues: Putative pterin-4-alpha-carbinolamine dehydratase (105 aa).

The protein belongs to the pterin-4-alpha-carbinolamine dehydratase family.

The enzyme catalyses (4aS,6R)-4a-hydroxy-L-erythro-5,6,7,8-tetrahydrobiopterin = (6R)-L-erythro-6,7-dihydrobiopterin + H2O. The chain is Putative pterin-4-alpha-carbinolamine dehydratase from Sinorhizobium medicae (strain WSM419) (Ensifer medicae).